Consider the following 61-residue polypeptide: Metallothionein-1 (61 aa).

An N-acetylmethionine modification is found at Met-1. The interval 1-29 (MDPNCSCPTGGSCTCAGSCKCKACRCPSC) is beta. Positions 5, 7, 13, 15, 19, 21, 24, 26, 29, 33, 34, 36, 37, 41, 44, 48, 50, 57, 59, and 60 each coordinate a divalent metal cation. The segment at 30-61 (KKSCCSCCPVGCAKCAQGCVCKGASDKCSCCA) is alpha.

Belongs to the metallothionein superfamily. Type 1 family. As to quaternary structure, monomer.

Metallothioneins have a high content of cysteine residues that bind various heavy metals; these proteins are transcriptionally regulated by both heavy metals and glucocorticoids. The chain is Metallothionein-1 (MT1) from Bos taurus (Bovine).